Reading from the N-terminus, the 184-residue chain is UPF0149 protein PputW619_5026 (184 aa).

The protein belongs to the UPF0149 family.

In Pseudomonas putida (strain W619), this protein is UPF0149 protein PputW619_5026.